A 344-amino-acid polypeptide reads, in one-letter code: L-rhamnose-proton symporter (344 aa).

The next 10 helical transmembrane spans lie at 4–24 (PILL…CFYA), 38–58 (WSLG…WWLL), 68–88 (FDMA…IGNI), 101–121 (MGIG…TPVL), 137–157 (TLLG…AGLL), 175–195 (LILA…MDAA), 207–227 (INAL…GAVV), 255–275 (LIAN…QFFF), 290–310 (ISWM…GLLF), and 324–344 (LVLG…GMAA).

It belongs to the L-rhamnose transporter (TC 2.A.7.6) family.

It is found in the cell inner membrane. The enzyme catalyses L-rhamnopyranose(in) + H(+)(in) = L-rhamnopyranose(out) + H(+)(out). Uptake of L-rhamnose across the cytoplasmic membrane with the concomitant transport of protons into the cell (symport system). In Pectobacterium carotovorum subsp. carotovorum (strain PC1), this protein is L-rhamnose-proton symporter.